A 493-amino-acid chain; its full sequence is Probable cytosol aminopeptidase (493 aa).

Mn(2+) is bound by residues Lys259 and Asp264. The active site involves Lys271. Mn(2+) is bound by residues Asp282, Asp341, and Glu343. Arg345 is an active-site residue.

It belongs to the peptidase M17 family. Mn(2+) is required as a cofactor.

The protein resides in the cytoplasm. It catalyses the reaction Release of an N-terminal amino acid, Xaa-|-Yaa-, in which Xaa is preferably Leu, but may be other amino acids including Pro although not Arg or Lys, and Yaa may be Pro. Amino acid amides and methyl esters are also readily hydrolyzed, but rates on arylamides are exceedingly low.. The catalysed reaction is Release of an N-terminal amino acid, preferentially leucine, but not glutamic or aspartic acids.. Presumably involved in the processing and regular turnover of intracellular proteins. Catalyzes the removal of unsubstituted N-terminal amino acids from various peptides. This is Probable cytosol aminopeptidase from Bacillus cytotoxicus (strain DSM 22905 / CIP 110041 / 391-98 / NVH 391-98).